Reading from the N-terminus, the 1850-residue chain is Chitin synthase V (1850 aa).

The disordered stretch occupies residues 1–27 (MASTLPPLGGGNGGPHTQHSLPSLPAH). The region spanning 1–779 (MASTLPPLGG…EIAGLVDGSA (779 aa)) is the Myosin motor domain. An ATP-binding site is contributed by 105-112 (GESGSGKS). 5 N-linked (GlcNAc...) asparagine glycosylation sites follow: N245, N290, N427, N481, and N558. Residues 289-309 (NNTSATGDDSGGFSHEGGQTS) form a disordered region. Positions 593–647 (SKPMRAPSVMSRKGGRGRGIASQRRQQESNLFDSGNTHAESRSPKGGNKGGIDQG) are disordered. The span at 620 to 630 (ESNLFDSGNTH) shows a compositional bias: polar residues. Residues 656–680 (LDNVQKAVTDPGTNAYFVFCLKPND) form an actin-binding region. Helical transmembrane passes span 884–904 (WVFT…RWIG) and 923–943 (MLIW…PMLI). Positions 947–1006 (QNVFSAAELSSHNGKDGNSAYVSIRGHVIDLGSFADRHYPSFVSRKTMLNYAGMDVSSLF) constitute a Cytochrome b5 heme-binding domain. 3 N-linked (GlcNAc...) asparagine glycosylation sites follow: N1033, N1058, and N1186. Residues 1196–1216 (LVLAVSILLVSVIAFKFFAAL) form a helical membrane-spanning segment. N-linked (GlcNAc...) asparagine glycosylation is found at N1453 and N1559. 4 helical membrane passes run 1568–1588 (LIPM…VVFI), 1590–1610 (LLST…IVLV), 1617–1637 (VPIT…IIFI), and 1644–1664 (MVGW…GLPL). The N-linked (GlcNAc...) asparagine glycan is linked to N1767. The DEK-C domain maps to 1800-1850 (LPSDDALLAEIRDILKTADLMTVTKKGIKQELERRFDVPLDAKRAYINSGK).

The protein in the N-terminal section; belongs to the TRAFAC class myosin-kinesin ATPase superfamily. Myosin family. It in the C-terminal section; belongs to the chitin synthase family. Class V subfamily. Expressed in conidia and during appressorium formation.

The protein localises to the cell membrane. It is found in the cell septum. Its subcellular location is the cell tip. The catalysed reaction is [(1-&gt;4)-N-acetyl-beta-D-glucosaminyl](n) + UDP-N-acetyl-alpha-D-glucosamine = [(1-&gt;4)-N-acetyl-beta-D-glucosaminyl](n+1) + UDP + H(+). Its function is as follows. Polymerizes chitin, a structural polymer of the cell wall and septum, by transferring the sugar moiety of UDP-GlcNAc to the non-reducing end of the growing chitin polymer. Contributes to the production of conidia and the ability of fungal conidia to germinate. Involved in the fungal cell wall integrity and the ability of conidia to withstand biophysical pressure. Required for appressorium formation and evasion of insect cellular and/or humoral defenses, promoting the fungal dimorphic transition to the production of hyphal bodies that occurs within hosts, and ultimately to virulence. The polypeptide is Chitin synthase V (Metarhizium acridum (strain CQMa 102)).